A 602-amino-acid polypeptide reads, in one-letter code: Threonine--tRNA ligase (602 aa).

Positions 208–499 are catalytic; that stretch reads DHRKLGTELK…LTEHCAGEFP (292 aa). Cys300, His351, and His476 together coordinate Zn(2+).

This sequence belongs to the class-II aminoacyl-tRNA synthetase family. As to quaternary structure, homodimer. Zn(2+) serves as cofactor.

It localises to the cytoplasm. It catalyses the reaction tRNA(Thr) + L-threonine + ATP = L-threonyl-tRNA(Thr) + AMP + diphosphate + H(+). In terms of biological role, catalyzes the attachment of threonine to tRNA(Thr) in a two-step reaction: L-threonine is first activated by ATP to form Thr-AMP and then transferred to the acceptor end of tRNA(Thr). Also edits incorrectly charged L-seryl-tRNA(Thr). This Campylobacter jejuni (strain RM1221) protein is Threonine--tRNA ligase.